We begin with the raw amino-acid sequence, 433 residues long: Enolase (433 aa).

Position 167 (glutamine 167) interacts with (2R)-2-phosphoglycerate. The active-site Proton donor is glutamate 209. Residues aspartate 246, glutamate 291, and aspartate 318 each contribute to the Mg(2+) site. Positions 343, 372, 373, and 394 each coordinate (2R)-2-phosphoglycerate. Lysine 343 acts as the Proton acceptor in catalysis.

This sequence belongs to the enolase family. Component of the RNA degradosome, a multiprotein complex involved in RNA processing and mRNA degradation. Requires Mg(2+) as cofactor.

The protein localises to the cytoplasm. Its subcellular location is the secreted. It localises to the cell surface. The catalysed reaction is (2R)-2-phosphoglycerate = phosphoenolpyruvate + H2O. It participates in carbohydrate degradation; glycolysis; pyruvate from D-glyceraldehyde 3-phosphate: step 4/5. Functionally, catalyzes the reversible conversion of 2-phosphoglycerate (2-PG) into phosphoenolpyruvate (PEP). It is essential for the degradation of carbohydrates via glycolysis. This chain is Enolase, found in Actinobacillus succinogenes (strain ATCC 55618 / DSM 22257 / CCUG 43843 / 130Z).